The chain runs to 749 residues: Protein Niban 2 (749 aa).

Residue Gly-2 is the site of N-myristoyl glycine attachment. Positions 68 to 192 (RIIFSGNLFQ…WQAVLQDCVR (125 aa)) constitute a PH domain. Residues Ser-568, Ser-574, Ser-607, Ser-628, Ser-647, Ser-650, Ser-669, Ser-674, Ser-685, Ser-695, and Ser-699 each carry the phosphoserine modification. The interval 589 to 749 (WGEQYGDSGD…EDSAGVQTEF (161 aa)) is disordered. A compositionally biased stretch (basic and acidic residues) spans 710 to 719 (VDLEPPKPSD). Over residues 723 to 749 (GEQVSSPGSRPPIHTTTEDSAGVQTEF) the composition is skewed to polar residues.

This sequence belongs to the Niban family. As apoptosis proceeds, degraded via an proteasome-independent pathway, probably by caspases.

Its subcellular location is the cytoplasm. The protein resides in the cytosol. It localises to the cell junction. It is found in the adherens junction. The protein localises to the membrane. Functionally, may play a role in apoptosis suppression. The polypeptide is Protein Niban 2 (Mus musculus (Mouse)).